The primary structure comprises 159 residues: Ribosomal RNA large subunit methyltransferase H (159 aa).

Residues Leu-76, Gly-108, and 127 to 132 contribute to the S-adenosyl-L-methionine site; that span reads FGRLTL.

The protein belongs to the RNA methyltransferase RlmH family. As to quaternary structure, homodimer.

The protein localises to the cytoplasm. The catalysed reaction is pseudouridine(1915) in 23S rRNA + S-adenosyl-L-methionine = N(3)-methylpseudouridine(1915) in 23S rRNA + S-adenosyl-L-homocysteine + H(+). Specifically methylates the pseudouridine at position 1915 (m3Psi1915) in 23S rRNA. The polypeptide is Ribosomal RNA large subunit methyltransferase H (Listeria monocytogenes serotype 4b (strain CLIP80459)).